Here is a 66-residue protein sequence, read N- to C-terminus: MMVPVRCFTCGNVVGEHWEEFKARTREAEEPEDPEKVLDELGVERHCCRRMLVSHKDLVDIVSPYQ.

Zn(2+) is bound by residues C7, C10, C47, and C48.

The protein belongs to the archaeal Rpo10/eukaryotic RPB10 RNA polymerase subunit family. In terms of assembly, part of the RNA polymerase complex. Requires Zn(2+) as cofactor.

It localises to the cytoplasm. The catalysed reaction is RNA(n) + a ribonucleoside 5'-triphosphate = RNA(n+1) + diphosphate. In terms of biological role, DNA-dependent RNA polymerase (RNAP) catalyzes the transcription of DNA into RNA using the four ribonucleoside triphosphates as substrates. This chain is DNA-directed RNA polymerase subunit Rpo10, found in Haloarcula marismortui (strain ATCC 43049 / DSM 3752 / JCM 8966 / VKM B-1809) (Halobacterium marismortui).